The chain runs to 427 residues: Terminal nucleotidyltransferase 5B (427 aa).

The tract at residues Met-1–Gln-49 is disordered. Low complexity predominate over residues Ala-15–Gly-30.

This sequence belongs to the TENT family.

The protein localises to the cytoplasm. The protein resides in the nucleus. It catalyses the reaction RNA(n) + ATP = RNA(n)-3'-adenine ribonucleotide + diphosphate. Functionally, catalyzes the transfer of one adenosine molecule from an ATP to an mRNA poly(A) tail bearing a 3'-OH terminal group in an ATP hydrolysis-dependent manner. May be involved in maintaining the translation efficiency of at least some genes through preventing degradation of their mRNAs. Prefers RNA molecules that are adenosine-rich close to 3'-end. In addition, may inhibit cell proliferation and cell cycle progression through ubiquitination of beta-catenin/CTNNB1. This Mus musculus (Mouse) protein is Terminal nucleotidyltransferase 5B.